An 89-amino-acid chain; its full sequence is MSITAERKQALIKDFGAKDGDTGSPEVQVAILTERITNLTGHFKSHHKDNHSRRGLLKLVSQRRSLLDYLKKKDEGRYKSLIERLGIRR.

It belongs to the universal ribosomal protein uS15 family. Part of the 30S ribosomal subunit. Forms a bridge to the 50S subunit in the 70S ribosome, contacting the 23S rRNA.

In terms of biological role, one of the primary rRNA binding proteins, it binds directly to 16S rRNA where it helps nucleate assembly of the platform of the 30S subunit by binding and bridging several RNA helices of the 16S rRNA. Forms an intersubunit bridge (bridge B4) with the 23S rRNA of the 50S subunit in the ribosome. The sequence is that of Small ribosomal subunit protein uS15 from Xanthobacter autotrophicus (strain ATCC BAA-1158 / Py2).